Consider the following 250-residue polypeptide: Flavin-dependent thymidylate synthase (250 aa).

One can recognise a ThyX domain in the interval 7–233 (LSVELIACSS…PTVFGDFEIE (227 aa)). DUMP is bound by residues 92–95 (ELVR), 103–107 (QLSQR), and R172. Residues 95–97 (RHR) and Q103 each bind FAD. Residues 95–105 (RHRHFSFSQLS) carry the ThyX motif motif. Residues 188–190 (NFR) and H194 contribute to the FAD site. A dUMP-binding site is contributed by R199. R199 (involved in ionization of N3 of dUMP, leading to its activation) is an active-site residue.

Belongs to the thymidylate synthase ThyX family. In terms of assembly, homotetramer. Requires FAD as cofactor.

It carries out the reaction dUMP + (6R)-5,10-methylene-5,6,7,8-tetrahydrofolate + NADPH + H(+) = dTMP + (6S)-5,6,7,8-tetrahydrofolate + NADP(+). Its pathway is pyrimidine metabolism; dTTP biosynthesis. Catalyzes the reductive methylation of 2'-deoxyuridine-5'-monophosphate (dUMP) to 2'-deoxythymidine-5'-monophosphate (dTMP) while utilizing 5,10-methylenetetrahydrofolate (mTHF) as the methyl donor, and NADPH and FADH(2) as the reductant. The chain is Flavin-dependent thymidylate synthase from Corynebacterium glutamicum (strain ATCC 13032 / DSM 20300 / JCM 1318 / BCRC 11384 / CCUG 27702 / LMG 3730 / NBRC 12168 / NCIMB 10025 / NRRL B-2784 / 534).